A 267-amino-acid polypeptide reads, in one-letter code: Indole-3-glycerol phosphate synthase 1 (267 aa).

Belongs to the TrpC family.

It catalyses the reaction 1-(2-carboxyphenylamino)-1-deoxy-D-ribulose 5-phosphate + H(+) = (1S,2R)-1-C-(indol-3-yl)glycerol 3-phosphate + CO2 + H2O. It participates in amino-acid biosynthesis; L-tryptophan biosynthesis; L-tryptophan from chorismate: step 4/5. The protein is Indole-3-glycerol phosphate synthase 1 (trpC1) of Ralstonia nicotianae (strain ATCC BAA-1114 / GMI1000) (Ralstonia solanacearum).